The sequence spans 521 residues: MMNNIHLDKILILDFGSQYTQLIARRVREIGVYCELFPYDVDSEFIKKLNPKGIILSGGPDTVTLDNAAKAPSIIFDLNIPILGICYGMQTMAIQLGGRATSANKHEYGFAKVRVRNHSPLLSDISDEGHGLLDVWMSHGIEVEQLPNGFKLIASTDNCNIAGFANVEKHYYGLQFHPEVTHTKQGERILERFISGICQCEKNWTTDNIIAKLVQNLKDQIGNANILLGLSGGVDSLVVAVLLQQAVGKQLTCVFVDNGLLRFNEGNEVMQIFAQNMDMKVIRANAHKKFYDALLNENEPEAKRKIIGRAFIEVFEEEAKKLDNIQFLAQGTIYPDVIESADAKYGKAKLIKSHHNVGGLPNDLQFKLVEPLKELFKDEVRKISVKLSIPPHIIYRHPFPGPGLGVRILGQVKQEYANILRQADAIFMDELHKNNLYDTVNQAFAVFLPIKSVGITGDERRYDYVIALRAVETIDFMTARWARLPYDFLDLVSNRIMNEISRISRVVYDVSGKPPATIEWE.

A Glutamine amidotransferase type-1 domain is found at 9-203 (KILILDFGSQ…ISGICQCEKN (195 aa)). The active-site Nucleophile is the cysteine 86. Residues histidine 177 and glutamate 179 contribute to the active site. One can recognise a GMPS ATP-PPase domain in the interval 204–396 (WTTDNIIAKL…LSIPPHIIYR (193 aa)). 231–237 (SGGVDSL) provides a ligand contact to ATP.

As to quaternary structure, homodimer.

The enzyme catalyses XMP + L-glutamine + ATP + H2O = GMP + L-glutamate + AMP + diphosphate + 2 H(+). Its pathway is purine metabolism; GMP biosynthesis; GMP from XMP (L-Gln route): step 1/1. Catalyzes the synthesis of GMP from XMP. The sequence is that of GMP synthase [glutamine-hydrolyzing] from Ruthia magnifica subsp. Calyptogena magnifica.